Here is a 148-residue protein sequence, read N- to C-terminus: Large ribosomal subunit protein uL11 (148 aa).

It belongs to the universal ribosomal protein uL11 family. In terms of assembly, part of the ribosomal stalk of the 50S ribosomal subunit. Interacts with L10 and the large rRNA to form the base of the stalk. L10 forms an elongated spine to which L12 dimers bind in a sequential fashion forming a multimeric L10(L12)X complex. One or more lysine residues are methylated.

In terms of biological role, forms part of the ribosomal stalk which helps the ribosome interact with GTP-bound translation factors. This is Large ribosomal subunit protein uL11 from Myxococcus xanthus (strain DK1622).